The chain runs to 372 residues: Formylglycine-generating enzyme (372 aa).

The N-terminal stretch at 1 to 31 is a signal peptide; it reads MAAPAREPALRCCIRLARVFLLLVLACEVAG. Residues Cys48 and Cys50 are joined by a disulfide bond. The interval 61–80 is disordered; the sequence is SSAAAQRYSREANAPGLTSG. Position 128 (Glu128) interacts with Ca(2+). A glycan (N-linked (GlcNAc...) asparagine) is linked at Asn139. 2 disulfide bridges follow: Cys216–Cys363 and Cys233–Cys344. The Ca(2+) site is built by Asn257, Ile258, Asp271, Phe273, Asn291, Gly294, and Glu298. 2 residues coordinate Cu(2+): Cys334 and Cys339. The interaction with sulfatases stretch occupies residues 339-358; it reads CYRYRCAARSQNTPDSSASN.

Belongs to the sulfatase-modifying factor family. As to quaternary structure, monomer, homodimer and heterodimer with SUMF2. Cu(2+) is required as a cofactor. In terms of processing, N-glycosylated. Contains high-mannose-type oligosaccharides.

The protein localises to the endoplasmic reticulum lumen. It catalyses the reaction L-cysteinyl-[sulfatase] + 2 a thiol + O2 = an organic disulfide + 3-oxo-L-alanyl-[sulfatase] + hydrogen sulfide + H2O + H(+). It functions in the pathway protein modification; sulfatase oxidation. Functionally, oxidase that catalyzes the conversion of cysteine to 3-oxoalanine on target proteins, using molecular oxygen and an unidentified reducing agent. 3-oxoalanine modification, which is also named formylglycine (fGly), occurs in the maturation of arylsulfatases and some alkaline phosphatases that use the hydrated form of 3-oxoalanine as a catalytic nucleophile. Known substrates include GALNS, ARSA, STS and ARSE. The protein is Formylglycine-generating enzyme of Mus musculus (Mouse).